We begin with the raw amino-acid sequence, 51 residues long: MYEEEKYEYICMRCGKKVRLDINEDPIRCTHCGFRLVMKPRHPVPRRYKAR.

Zn(2+) is bound by residues Cys-14, Cys-29, and Cys-32.

The protein belongs to the archaeal Rpo12/eukaryotic RPC10 RNA polymerase subunit family. Part of the RNA polymerase complex. Requires Zn(2+) as cofactor.

The protein resides in the cytoplasm. The enzyme catalyses RNA(n) + a ribonucleoside 5'-triphosphate = RNA(n+1) + diphosphate. In terms of biological role, DNA-dependent RNA polymerase (RNAP) catalyzes the transcription of DNA into RNA using the four ribonucleoside triphosphates as substrates. This is DNA-directed RNA polymerase subunit Rpo12 from Methanopyrus kandleri (strain AV19 / DSM 6324 / JCM 9639 / NBRC 100938).